The chain runs to 525 residues: GMP synthase [glutamine-hydrolyzing] (525 aa).

The region spanning 9-207 is the Glutamine amidotransferase type-1 domain; the sequence is RILILDFGSQ…VLGICGCEAL (199 aa). C86 serves as the catalytic Nucleophile. Active-site residues include H181 and E183. A GMPS ATP-PPase domain is found at 208–400; it reads WTSATIIEDA…LGLPYDMLYR (193 aa). 235-241 is a binding site for ATP; that stretch reads SGGVDSS.

In terms of assembly, homodimer.

The enzyme catalyses XMP + L-glutamine + ATP + H2O = GMP + L-glutamate + AMP + diphosphate + 2 H(+). The protein operates within purine metabolism; GMP biosynthesis; GMP from XMP (L-Gln route): step 1/1. In terms of biological role, catalyzes the synthesis of GMP from XMP. This is GMP synthase [glutamine-hydrolyzing] from Yersinia pseudotuberculosis serotype IB (strain PB1/+).